The following is a 419-amino-acid chain: GTPase Obg (419 aa).

The Obg domain occupies 1–158; the sequence is MIFIDTAEII…RRLRLELKLV (158 aa). Residues 159–328 form the OBG-type G domain; that stretch reads AHVGLVGLPN…LVDVLFELIS (170 aa). GTP is bound by residues 165 to 172, 190 to 194, 211 to 214, 281 to 284, and 309 to 311; these read GLPNAGKS, FTTRS, DVPG, NKID, and SAA. 2 residues coordinate Mg(2+): S172 and T192. One can recognise an OCT domain in the interval 344–419; the sequence is ELPPLPEDFS…VIHDKAFEIL (76 aa).

The protein belongs to the TRAFAC class OBG-HflX-like GTPase superfamily. OBG GTPase family. As to quaternary structure, monomer. Mg(2+) is required as a cofactor.

It is found in the cytoplasm. Its function is as follows. An essential GTPase which binds GTP, GDP and possibly (p)ppGpp with moderate affinity, with high nucleotide exchange rates and a fairly low GTP hydrolysis rate. Plays a role in control of the cell cycle, stress response, ribosome biogenesis and in those bacteria that undergo differentiation, in morphogenesis control. The protein is GTPase Obg of Coprothermobacter proteolyticus (strain ATCC 35245 / DSM 5265 / OCM 4 / BT).